The primary structure comprises 383 residues: Probable cell wall hydrolase LytN (383 aa).

The N-terminal stretch at 1–49 (MFVYYCKECFIMNKQQSKVRYSIRKVSIGILSISIGMFLALGMSNKAYA) is a signal peptide. Residues 175 to 219 (QIYTVKKGDTLSAIALKYKTTVSNIQNTNNIANPNLIFIGQKLKV) form the LysM domain. The Peptidase C51 domain occupies 241 to 378 (NSSTLNYLKT…NYENDMIFIR (138 aa)).

It is found in the secreted. In terms of biological role, probably involved in peptidoglycan hydrolysis. The polypeptide is Probable cell wall hydrolase LytN (lytN) (Staphylococcus aureus (strain MSSA476)).